Consider the following 101-residue polypeptide: Small ubiquitin-related modifier 1 (101 aa).

S2 is modified (N-acetylserine). A Phosphoserine modification is found at S2. A Glycyl lysine isopeptide (Lys-Gly) (interchain with G-Cter in SUMO1); alternate cross-link involves residue K7. A Glycyl lysine isopeptide (Lys-Gly) (interchain with G-Cter in SUMO2); alternate cross-link involves residue K7. At S9 the chain carries Phosphoserine. Glycyl lysine isopeptide (Lys-Gly) (interchain with G-Cter in SUMO2) cross-links involve residues K16, K17, and K23. One can recognise a Ubiquitin-like domain in the interval 20–97; the sequence is EYIKLKVIGQ…IEVYHEQTGG (78 aa). Residue K25 forms a Glycyl lysine isopeptide (Lys-Gly) (interchain with G-Cter in SUMO1) linkage. A Phosphoserine modification is found at S32. Residues K37, K39, K45, and K46 each participate in a glycyl lysine isopeptide (Lys-Gly) (interchain with G-Cter in SUMO2) cross-link. A Glycyl lysine isopeptide (Gly-Lys) (interchain with K-? in acceptor proteins) cross-link involves residue G97. Residues 98 to 101 constitute a propeptide that is removed on maturation; it reads HSTV.

The protein belongs to the ubiquitin family. SUMO subfamily. As to quaternary structure, covalently attached to KCNB1; UBE2I increases cross-linking with KCNB1 and PIAS1 decreases cross-links with KCNB1. Interacts with SAE2, RANBP2, PIAS1 and PIAS2. Interacts with PRKN. Covalently attached to a number of proteins such as IKFZ1, PML, RANGAP1, HIPK2, SP100, p53, p73-alpha, MDM2, JUN, DNMT3B and TDG. Also interacts with HIF1A, HIPK2, HIPK3, CHD3, EXOSC9, RAD51 and RAD52. Interacts with USP25 (via ts SIM domain); the interaction weakly sumoylates USP25. Interacts with SIMC1, CASP8AP2, RNF111 and SOBP (via SIM domains). Interacts with BHLHE40/DEC1. Interacts with RWDD3. Interacts with UBE2I/UBC9 and this interaction is enhanced in the presence of RWDD3. Interacts with MTA1. Interacts with SENP2. Interacts with HINT1. Post-translationally, cleavage of precursor form by SENP1, SENP2 is necessary for function. In terms of processing, polymeric SUMO1 chains undergo polyubiquitination by RNF4.

The protein resides in the nucleus membrane. It localises to the nucleus speckle. It is found in the cytoplasm. The protein localises to the nucleus. Its subcellular location is the PML body. The protein resides in the cell membrane. Its function is as follows. Ubiquitin-like protein that can be covalently attached to proteins as a monomer or a lysine-linked polymer. Covalent attachment via an isopeptide bond to its substrates requires prior activation by the E1 complex SAE1-SAE2 and linkage to the E2 enzyme UBE2I, and can be promoted by E3 ligases such as PIAS1-4, RANBP2 or CBX4. This post-translational modification on lysine residues of proteins plays a crucial role in a number of cellular processes such as nuclear transport, DNA replication and repair, mitosis and signal transduction. Involved for instance in targeting RANGAP1 to the nuclear pore complex protein RANBP2. Covalently attached to the voltage-gated potassium channel KCNB1; this modulates the gating characteristics of KCNB1. Polymeric SUMO1 chains are also susceptible to polyubiquitination which functions as a signal for proteasomal degradation of modified proteins. May also regulate a network of genes involved in palate development. Covalently attached to ZFHX3. The chain is Small ubiquitin-related modifier 1 (SUMO1) from Cervus nippon (Sika deer).